The primary structure comprises 366 residues: Beta sliding clamp (366 aa).

The protein belongs to the beta sliding clamp family. In terms of assembly, forms a ring-shaped head-to-tail homodimer around DNA which binds and tethers DNA polymerases and other proteins to the DNA. The DNA replisome complex has a single clamp-loading complex (3 tau and 1 each of delta, delta', psi and chi subunits) which binds 3 Pol III cores (1 core on the leading strand and 2 on the lagging strand) each with a beta sliding clamp dimer. Additional proteins in the replisome are other copies of gamma, psi and chi, Ssb, DNA helicase and RNA primase.

It is found in the cytoplasm. Confers DNA tethering and processivity to DNA polymerases and other proteins. Acts as a clamp, forming a ring around DNA (a reaction catalyzed by the clamp-loading complex) which diffuses in an ATP-independent manner freely and bidirectionally along dsDNA. Initially characterized for its ability to contact the catalytic subunit of DNA polymerase III (Pol III), a complex, multichain enzyme responsible for most of the replicative synthesis in bacteria; Pol III exhibits 3'-5' exonuclease proofreading activity. The beta chain is required for initiation of replication as well as for processivity of DNA replication. The protein is Beta sliding clamp (dnaN) of Chlamydia muridarum (strain MoPn / Nigg).